A 317-amino-acid chain; its full sequence is Beta-ketoacyl-[acyl-carrier-protein] synthase III (317 aa).

Active-site residues include Cys112 and His244. The segment at 245 to 249 is ACP-binding; sequence QANLR. Asn274 is an active-site residue.

The protein belongs to the thiolase-like superfamily. FabH family. In terms of assembly, homodimer.

The protein resides in the cytoplasm. The catalysed reaction is malonyl-[ACP] + acetyl-CoA + H(+) = 3-oxobutanoyl-[ACP] + CO2 + CoA. Its pathway is lipid metabolism; fatty acid biosynthesis. In terms of biological role, catalyzes the condensation reaction of fatty acid synthesis by the addition to an acyl acceptor of two carbons from malonyl-ACP. Catalyzes the first condensation reaction which initiates fatty acid synthesis and may therefore play a role in governing the total rate of fatty acid production. Possesses both acetoacetyl-ACP synthase and acetyl transacylase activities. Its substrate specificity determines the biosynthesis of branched-chain and/or straight-chain of fatty acids. The chain is Beta-ketoacyl-[acyl-carrier-protein] synthase III from Salmonella typhimurium (strain LT2 / SGSC1412 / ATCC 700720).